The sequence spans 240 residues: Phosphoribosylaminoimidazole-succinocarboxamide synthase (240 aa).

This sequence belongs to the SAICAR synthetase family.

It carries out the reaction 5-amino-1-(5-phospho-D-ribosyl)imidazole-4-carboxylate + L-aspartate + ATP = (2S)-2-[5-amino-1-(5-phospho-beta-D-ribosyl)imidazole-4-carboxamido]succinate + ADP + phosphate + 2 H(+). It functions in the pathway purine metabolism; IMP biosynthesis via de novo pathway; 5-amino-1-(5-phospho-D-ribosyl)imidazole-4-carboxamide from 5-amino-1-(5-phospho-D-ribosyl)imidazole-4-carboxylate: step 1/2. The protein is Phosphoribosylaminoimidazole-succinocarboxamide synthase of Acidithiobacillus ferrooxidans (strain ATCC 23270 / DSM 14882 / CIP 104768 / NCIMB 8455) (Ferrobacillus ferrooxidans (strain ATCC 23270)).